A 101-amino-acid chain; its full sequence is Putative defensin-like protein 86 (101 aa).

Residues 1–27 (MAITKMSSLIILSLMMLTFIYIPMISG) form the signal peptide. 4 disulfides stabilise this stretch: Cys-35/Cys-71, Cys-39/Cys-59, Cys-45/Cys-69, and Cys-49/Cys-70.

This sequence belongs to the DEFL family.

The protein localises to the secreted. This is Putative defensin-like protein 86 (LCR82) from Arabidopsis thaliana (Mouse-ear cress).